Here is a 499-residue protein sequence, read N- to C-terminus: Glycerol kinase (499 aa).

Thr13 is an ADP binding site. 3 residues coordinate ATP: Thr13, Thr14, and Ser15. Thr13 is a sn-glycerol 3-phosphate binding site. Position 17 (Arg17) interacts with ADP. Residues Arg83, Glu84, Tyr135, and Asp244 each coordinate sn-glycerol 3-phosphate. The glycerol site is built by Arg83, Glu84, Tyr135, Asp244, and Gln245. ADP-binding residues include Thr266 and Gly309. Residues Thr266, Gly309, Gln313, and Gly410 each coordinate ATP. Residues Gly410 and Asn414 each coordinate ADP.

The protein belongs to the FGGY kinase family. As to quaternary structure, homotetramer and homodimer (in equilibrium).

The enzyme catalyses glycerol + ATP = sn-glycerol 3-phosphate + ADP + H(+). The protein operates within polyol metabolism; glycerol degradation via glycerol kinase pathway; sn-glycerol 3-phosphate from glycerol: step 1/1. Activated by phosphorylation and inhibited by fructose 1,6-bisphosphate (FBP). Key enzyme in the regulation of glycerol uptake and metabolism. Catalyzes the phosphorylation of glycerol to yield sn-glycerol 3-phosphate. This Brevibacillus brevis (strain 47 / JCM 6285 / NBRC 100599) protein is Glycerol kinase.